We begin with the raw amino-acid sequence, 310 residues long: Glutaminase (310 aa).

Residues serine 66, asparagine 117, glutamate 161, asparagine 168, tyrosine 192, tyrosine 244, and valine 262 each contribute to the substrate site.

This sequence belongs to the glutaminase family. In terms of assembly, homotetramer.

The enzyme catalyses L-glutamine + H2O = L-glutamate + NH4(+). The sequence is that of Glutaminase from Shigella boydii serotype 4 (strain Sb227).